Reading from the N-terminus, the 409-residue chain is O-glucosyltransferase rumi (409 aa).

The signal sequence occupies residues 1-20; it reads MLINVVLIILLVGLNGKASG. 4 disulfide bridges follow: Cys62-Cys73, Cys71-Cys376, Cys118-Cys124, and Cys280-Cys303. Asp149 acts as the Proton donor/acceptor in catalysis. The interval 190 to 195 is interaction with the consensus sequence C-X-S-X-[PA]-C in peptide substrates; it reads ATKLHP. UDP-alpha-D-glucose contacts are provided by residues 227-231, Arg235, 274-276, and 292-296; these read RGSRT, VSF, and AASFR. Residues 406-409 carry the Prevents secretion from ER motif; that stretch reads KDEL.

This sequence belongs to the glycosyltransferase 90 family.

It is found in the endoplasmic reticulum lumen. It functions in the pathway protein modification; protein glycosylation. In terms of biological role, protein O-glucosyltransferase. Catalyzes the reaction that attaches glucose through an O-glycosidic linkage to a conserved serine residue found in the consensus sequence C-X-S-X-[PA]-C in epidermal growth factor-like repeats. Regulates Notch signaling by glucosylating Notch in the ER, glucosylation is required for the correct folding and cleavage of Notch. This chain is O-glucosyltransferase rumi, found in Drosophila pseudoobscura pseudoobscura (Fruit fly).